The following is a 205-amino-acid chain: MELNGLRVSRETQGRLQHFALLFQKWAKTINLVAPSTLDALWHRHIADSSQIFQICPRPVTWVDLGSGGGFPGVITAIFLAELQGGWVHLVESNHKKAAFLRTALRETNARGSVHAIRIEDASAEIGDCDAISARALADLDGLIAYSAPWMLGKENCRGFFHKGRDYLREIAEARGRWEFDLIEHESAVEQESVILEISNLRRLV.

S-adenosyl-L-methionine contacts are provided by residues Gly66, Phe71, 119-120, and Arg135; that span reads IE.

It belongs to the methyltransferase superfamily. RNA methyltransferase RsmG family.

Its subcellular location is the cytoplasm. It carries out the reaction guanosine(527) in 16S rRNA + S-adenosyl-L-methionine = N(7)-methylguanosine(527) in 16S rRNA + S-adenosyl-L-homocysteine. In terms of biological role, specifically methylates the N7 position of guanine in position 527 of 16S rRNA. In Rhizobium etli (strain ATCC 51251 / DSM 11541 / JCM 21823 / NBRC 15573 / CFN 42), this protein is Ribosomal RNA small subunit methyltransferase G.